A 167-amino-acid chain; its full sequence is Dihydrofolate reductase (167 aa).

The DHFR domain occupies 1-162 (MFISMWAQDK…YPHRFQKWQK (162 aa)). Residues Ala-7 and 13–19 (LIGKDGL) each bind NADP(+). Asp-27 serves as a coordination point for substrate. 45–46 (KT) is an NADP(+) binding site. Substrate is bound at residue Arg-58. NADP(+) contacts are provided by residues 64–65 (TT) and 99–106 (GGSRIFQA). Substrate is bound at residue Thr-117.

This sequence belongs to the dihydrofolate reductase family.

The catalysed reaction is (6S)-5,6,7,8-tetrahydrofolate + NADP(+) = 7,8-dihydrofolate + NADPH + H(+). Its pathway is cofactor biosynthesis; tetrahydrofolate biosynthesis; 5,6,7,8-tetrahydrofolate from 7,8-dihydrofolate: step 1/1. Key enzyme in folate metabolism. Catalyzes an essential reaction for de novo glycine and purine synthesis, and for DNA precursor synthesis. The chain is Dihydrofolate reductase (folA) from Enterococcus faecium (Streptococcus faecium).